Here is a 503-residue protein sequence, read N- to C-terminus: Aromatase (503 aa).

A run of 2 helical transmembrane segments spans residues 19-39 (EVMPVATLPILLLTGFLFFVW) and 51-71 (GYCMGIGPLISHLRFLWMGLG). A substrate-binding pocket region spans residues 294-324 (ENVNQCILEMMIAAPDTLSVTVFFMLCLIAQ). Aspartate 309 and methionine 374 together coordinate substrate. Residue cysteine 437 coordinates heme.

It belongs to the cytochrome P450 family. It depends on heme as a cofactor. As to expression, expressed in placenta. Highly expressed in follicles (0 hour:hCG), followed by a drop (12-24 hour:hCG) and by an increase (30-39 hour:hCG). Highly expressed in corpora lutea. Also expressed in granulosa cell layer. Not expressed in theca interna.

Its subcellular location is the endoplasmic reticulum membrane. The protein resides in the microsome membrane. It catalyses the reaction testosterone + 3 reduced [NADPH--hemoprotein reductase] + 3 O2 = 17beta-estradiol + formate + 3 oxidized [NADPH--hemoprotein reductase] + 4 H2O + 4 H(+). The enzyme catalyses androst-4-ene-3,17-dione + 3 reduced [NADPH--hemoprotein reductase] + 3 O2 = estrone + formate + 3 oxidized [NADPH--hemoprotein reductase] + 4 H2O + 4 H(+). The catalysed reaction is androst-4-ene-3,17-dione + reduced [NADPH--hemoprotein reductase] + O2 = 19-hydroxyandrost-4-ene-3,17-dione + oxidized [NADPH--hemoprotein reductase] + H2O + H(+). It carries out the reaction 19-hydroxyandrost-4-ene-3,17-dione + reduced [NADPH--hemoprotein reductase] + O2 = 19-oxo-androst-4-ene-3,17-dione + oxidized [NADPH--hemoprotein reductase] + 2 H2O + H(+). It catalyses the reaction 19-oxo-androst-4-ene-3,17-dione + reduced [NADPH--hemoprotein reductase] + O2 = estrone + formate + oxidized [NADPH--hemoprotein reductase] + H2O + 2 H(+). The enzyme catalyses estrone + reduced [NADPH--hemoprotein reductase] + O2 = 2-hydroxyestrone + oxidized [NADPH--hemoprotein reductase] + H2O + H(+). The catalysed reaction is 17beta-hydroxy-5alpha-androstan-3-one + reduced [NADPH--hemoprotein reductase] + O2 = 17beta,19-dihydroxy-3-oxo-5alpha-androstanone + oxidized [NADPH--hemoprotein reductase] + H2O + H(+). It carries out the reaction 17beta,19-dihydroxy-3-oxo-5alpha-androstanone + reduced [NADPH--hemoprotein reductase] + O2 = 17beta-hydroxy-3,19-dioxo-5alpha-androstanone + oxidized [NADPH--hemoprotein reductase] + 2 H2O + H(+). It catalyses the reaction 17beta-hydroxy-3,19-dioxo-5alpha-androstanone + reduced [NADPH--hemoprotein reductase] + O2 = 17beta-hydroxy-3-oxo-19-nor-5alpha-androst-1-ene + formate + oxidized [NADPH--hemoprotein reductase] + H2O + 2 H(+). It functions in the pathway steroid hormone biosynthesis. In terms of biological role, a cytochrome P450 monooxygenase that catalyzes the conversion of C19 androgens, androst-4-ene-3,17-dione (androstenedione) and testosterone to the C18 estrogens, estrone and estradiol, respectively. Catalyzes three successive oxidations of C19 androgens: two conventional oxidations at C19 yielding 19-hydroxy and 19-oxo/19-aldehyde derivatives, followed by a third oxidative aromatization step that involves C1-beta hydrogen abstraction combined with cleavage of the C10-C19 bond to yield a phenolic A ring and formic acid. Alternatively, the third oxidative reaction yields a 19-norsteroid and formic acid. Converts dihydrotestosterone to delta1,10-dehydro 19-nordihydrotestosterone and may play a role in homeostasis of this potent androgen. Also displays 2-hydroxylase activity toward estrone. Mechanistically, uses molecular oxygen inserting one oxygen atom into a substrate, and reducing the second into a water molecule, with two electrons provided by NADPH via cytochrome P450 reductase (CPR; NADPH-ferrihemoprotein reductase). The protein is Aromatase (CYP19A1) of Equus caballus (Horse).